A 186-amino-acid chain; its full sequence is Putative 5'(3')-deoxyribonucleotidase (186 aa).

Catalysis depends on Asp-6, which acts as the Nucleophile. Asp-6, Asp-8, and Asp-137 together coordinate Mg(2+). Asp-8 functions as the Proton donor in the catalytic mechanism.

This sequence belongs to the 5'(3')-deoxyribonucleotidase family. Mg(2+) is required as a cofactor.

Functionally, dephosphorylates the 5' and 2'(3')-phosphates of deoxyribonucleotides. The chain is Putative 5'(3')-deoxyribonucleotidase from Bordetella pertussis (strain Tohama I / ATCC BAA-589 / NCTC 13251).